A 473-amino-acid polypeptide reads, in one-letter code: Photosystem II CP43 reaction center protein (473 aa).

Residues 1-14 (MKTLYSPRRFYPVE) constitute a propeptide that is removed on maturation. Thr-15 bears the N-acetylthreonine mark. Thr-15 bears the Phosphothreonine mark. 5 consecutive transmembrane segments (helical) span residues 69-93 (LFEV…PHLA), 134-155 (LIGP…KDRN), 178-200 (KALF…RKIT), 255-275 (KPFA…LSYS), and 291-312 (WFNN…ASQA). Glu-367 contributes to the [CaMn4O5] cluster binding site. A helical transmembrane segment spans residues 447–471 (RARAAAAGFEKGIDRDLEPVLFMTP).

The protein belongs to the PsbB/PsbC family. PsbC subfamily. As to quaternary structure, PSII is composed of 1 copy each of membrane proteins PsbA, PsbB, PsbC, PsbD, PsbE, PsbF, PsbH, PsbI, PsbJ, PsbK, PsbL, PsbM, PsbT, PsbX, PsbY, PsbZ, Psb30/Ycf12, at least 3 peripheral proteins of the oxygen-evolving complex and a large number of cofactors. It forms dimeric complexes. Binds multiple chlorophylls and provides some of the ligands for the Ca-4Mn-5O cluster of the oxygen-evolving complex. It may also provide a ligand for a Cl- that is required for oxygen evolution. PSII binds additional chlorophylls, carotenoids and specific lipids. is required as a cofactor.

It is found in the plastid. Its subcellular location is the chloroplast thylakoid membrane. One of the components of the core complex of photosystem II (PSII). It binds chlorophyll and helps catalyze the primary light-induced photochemical processes of PSII. PSII is a light-driven water:plastoquinone oxidoreductase, using light energy to abstract electrons from H(2)O, generating O(2) and a proton gradient subsequently used for ATP formation. The sequence is that of Photosystem II CP43 reaction center protein from Gnetum parvifolium (Small-leaved jointfir).